Reading from the N-terminus, the 557-residue chain is Dihydroxy-acid dehydratase (557 aa).

Asp-78 is a binding site for Mg(2+). Residue Cys-119 participates in [2Fe-2S] cluster binding. Residues Asp-120 and Lys-121 each contribute to the Mg(2+) site. Lys-121 is subject to N6-carboxylysine. Residue Cys-192 coordinates [2Fe-2S] cluster. Glu-442 is a binding site for Mg(2+). The active-site Proton acceptor is Ser-468.

This sequence belongs to the IlvD/Edd family. Homodimer. Requires [2Fe-2S] cluster as cofactor. It depends on Mg(2+) as a cofactor.

It catalyses the reaction (2R)-2,3-dihydroxy-3-methylbutanoate = 3-methyl-2-oxobutanoate + H2O. It carries out the reaction (2R,3R)-2,3-dihydroxy-3-methylpentanoate = (S)-3-methyl-2-oxopentanoate + H2O. The protein operates within amino-acid biosynthesis; L-isoleucine biosynthesis; L-isoleucine from 2-oxobutanoate: step 3/4. Its pathway is amino-acid biosynthesis; L-valine biosynthesis; L-valine from pyruvate: step 3/4. In terms of biological role, functions in the biosynthesis of branched-chain amino acids. Catalyzes the dehydration of (2R,3R)-2,3-dihydroxy-3-methylpentanoate (2,3-dihydroxy-3-methylvalerate) into 2-oxo-3-methylpentanoate (2-oxo-3-methylvalerate) and of (2R)-2,3-dihydroxy-3-methylbutanoate (2,3-dihydroxyisovalerate) into 2-oxo-3-methylbutanoate (2-oxoisovalerate), the penultimate precursor to L-isoleucine and L-valine, respectively. The polypeptide is Dihydroxy-acid dehydratase (Bacillus mycoides (strain KBAB4) (Bacillus weihenstephanensis)).